Reading from the N-terminus, the 165-residue chain is Inorganic pyrophosphatase (165 aa).

Lys-21, Arg-35, and Tyr-47 together coordinate substrate. Asp-57, Asp-62, and Asp-94 together coordinate Mg(2+). Tyr-131 serves as a coordination point for substrate.

It belongs to the PPase family. In terms of assembly, homotrimer. In presence of divalent cations the trimers aggregate to form a hexamer. Requires Mg(2+) as cofactor.

The protein resides in the cytoplasm. It carries out the reaction diphosphate + H2O = 2 phosphate + H(+). In terms of biological role, catalyzes the hydrolysis of inorganic pyrophosphate (PPi) forming two phosphate ions. This chain is Inorganic pyrophosphatase, found in Bacillus sp. (strain PS3).